The following is a 131-amino-acid chain: C-type natriuretic peptide (131 aa).

A signal peptide spans 1 to 20 (MMCKALVFAVLLLAVPLERA). Positions 21 to 109 (DSRALRTPVD…KRALPDRAKR (89 aa)) are excised as a propeptide. A disulfide bridge connects residues C115 and C131.

It belongs to the natriuretic peptide family. As to expression, highly expressed in brain and liver, and moderately in gut, gills and heart. Expressed to a low level in atrium, ventricle and liver of fresh water eels.

The protein resides in the secreted. In terms of biological role, hormone which plays a role in endochondral ossification through regulation of cartilaginous growth plate chondrocytes proliferation and differentiation. May also be vasoactive and natriuretic. May be important for freshwater adaptation. In Anguilla japonica (Japanese eel), this protein is C-type natriuretic peptide (cnp).